The sequence spans 555 residues: 2-succinyl-5-enolpyruvyl-6-hydroxy-3-cyclohexene-1-carboxylate synthase (555 aa).

This sequence belongs to the TPP enzyme family. MenD subfamily. In terms of assembly, homodimer. Mg(2+) is required as a cofactor. Mn(2+) serves as cofactor. It depends on thiamine diphosphate as a cofactor.

The enzyme catalyses isochorismate + 2-oxoglutarate + H(+) = 5-enolpyruvoyl-6-hydroxy-2-succinyl-cyclohex-3-ene-1-carboxylate + CO2. It functions in the pathway quinol/quinone metabolism; 1,4-dihydroxy-2-naphthoate biosynthesis; 1,4-dihydroxy-2-naphthoate from chorismate: step 2/7. Its pathway is quinol/quinone metabolism; menaquinone biosynthesis. Functionally, catalyzes the thiamine diphosphate-dependent decarboxylation of 2-oxoglutarate and the subsequent addition of the resulting succinic semialdehyde-thiamine pyrophosphate anion to isochorismate to yield 2-succinyl-5-enolpyruvyl-6-hydroxy-3-cyclohexene-1-carboxylate (SEPHCHC). In Kineococcus radiotolerans (strain ATCC BAA-149 / DSM 14245 / SRS30216), this protein is 2-succinyl-5-enolpyruvyl-6-hydroxy-3-cyclohexene-1-carboxylate synthase.